The following is a 334-amino-acid chain: Porphobilinogen deaminase (334 aa).

Position 250 is an S-(dipyrrolylmethanemethyl)cysteine (Cys250).

It belongs to the HMBS family. In terms of assembly, monomer. Dipyrromethane is required as a cofactor.

It carries out the reaction 4 porphobilinogen + H2O = hydroxymethylbilane + 4 NH4(+). Its pathway is porphyrin-containing compound metabolism; protoporphyrin-IX biosynthesis; coproporphyrinogen-III from 5-aminolevulinate: step 2/4. Its function is as follows. Tetrapolymerization of the monopyrrole PBG into the hydroxymethylbilane pre-uroporphyrinogen in several discrete steps. The chain is Porphobilinogen deaminase from Cutibacterium acnes (strain DSM 16379 / KPA171202) (Propionibacterium acnes).